A 126-amino-acid chain; its full sequence is Large ribosomal subunit protein bL17 (126 aa).

Belongs to the bacterial ribosomal protein bL17 family. Part of the 50S ribosomal subunit. Contacts protein L32.

The sequence is that of Large ribosomal subunit protein bL17 from Nitrosococcus oceani (strain ATCC 19707 / BCRC 17464 / JCM 30415 / NCIMB 11848 / C-107).